Consider the following 207-residue polypeptide: Urease accessory protein UreG (207 aa).

16–23 (GPVGSGKT) lines the GTP pocket.

It belongs to the SIMIBI class G3E GTPase family. UreG subfamily. As to quaternary structure, homodimer. UreD, UreF and UreG form a complex that acts as a GTP-hydrolysis-dependent molecular chaperone, activating the urease apoprotein by helping to assemble the nickel containing metallocenter of UreC. The UreE protein probably delivers the nickel.

Its subcellular location is the cytoplasm. Functionally, facilitates the functional incorporation of the urease nickel metallocenter. This process requires GTP hydrolysis, probably effectuated by UreG. This Cupriavidus metallidurans (strain ATCC 43123 / DSM 2839 / NBRC 102507 / CH34) (Ralstonia metallidurans) protein is Urease accessory protein UreG.